We begin with the raw amino-acid sequence, 118 residues long: Large ribosomal subunit protein bL20c (118 aa).

This sequence belongs to the bacterial ribosomal protein bL20 family.

The protein localises to the plastid. Functionally, binds directly to 23S ribosomal RNA and is necessary for the in vitro assembly process of the 50S ribosomal subunit. It is not involved in the protein synthesizing functions of that subunit. The protein is Large ribosomal subunit protein bL20c (rpl20) of Cuscuta reflexa (Southern Asian dodder).